Reading from the N-terminus, the 88-residue chain is Small ribosomal subunit protein bS20 (88 aa).

A disordered region spans residues Met1–Met27.

It belongs to the bacterial ribosomal protein bS20 family.

Binds directly to 16S ribosomal RNA. The sequence is that of Small ribosomal subunit protein bS20 from Shewanella sediminis (strain HAW-EB3).